Here is a 339-residue protein sequence, read N- to C-terminus: Phenylalanine--tRNA ligase alpha subunit (339 aa).

Glutamate 247 serves as a coordination point for Mg(2+).

Belongs to the class-II aminoacyl-tRNA synthetase family. Phe-tRNA synthetase alpha subunit type 1 subfamily. As to quaternary structure, tetramer of two alpha and two beta subunits. Requires Mg(2+) as cofactor.

Its subcellular location is the cytoplasm. It catalyses the reaction tRNA(Phe) + L-phenylalanine + ATP = L-phenylalanyl-tRNA(Phe) + AMP + diphosphate + H(+). This is Phenylalanine--tRNA ligase alpha subunit (pheS) from Deinococcus radiodurans (strain ATCC 13939 / DSM 20539 / JCM 16871 / CCUG 27074 / LMG 4051 / NBRC 15346 / NCIMB 9279 / VKM B-1422 / R1).